The following is a 297-amino-acid chain: Tyrosine recombinase XerD (297 aa).

The Core-binding (CB) domain occupies 1 to 86 (MNDLIEDFLH…SLRSFFHYLM (86 aa)). The region spanning 107 to 291 (GLPKVLNLDD…TKLRLKDVYK (185 aa)) is the Tyr recombinase domain. Catalysis depends on residues Arg-147, Lys-171, His-243, Arg-246, and His-269. Catalysis depends on Tyr-278, which acts as the O-(3'-phospho-DNA)-tyrosine intermediate.

Belongs to the 'phage' integrase family. XerD subfamily. Forms a cyclic heterotetrameric complex composed of two molecules of XerC and two molecules of XerD.

It is found in the cytoplasm. Site-specific tyrosine recombinase, which acts by catalyzing the cutting and rejoining of the recombining DNA molecules. The XerC-XerD complex is essential to convert dimers of the bacterial chromosome into monomers to permit their segregation at cell division. It also contributes to the segregational stability of plasmids. The protein is Tyrosine recombinase XerD of Listeria monocytogenes serotype 4b (strain F2365).